Reading from the N-terminus, the 255-residue chain is F-box only protein 44 (255 aa).

An F-box domain is found at 3–50; the sequence is VGNINELPENILLELFTHVPARQLLLNCRLVCSLWRDLIDLVTLWKRK. The FBA domain maps to 71-252; sequence FYFLRSLHRN…VTNSSITIGP (182 aa).

In terms of assembly, part of a SCF (SKP1-cullin-F-box) protein ligase complex. Interacts with SKP1 and CUL1. In terms of tissue distribution, abundantly expressed in brain and kidney. Expressed at lower levels in heart, spleen and liver.

Functionally, substrate-recognition component of the SCF (SKP1-CUL1-F-box protein)-type E3 ubiquitin ligase complex. This chain is F-box only protein 44 (FBXO44), found in Homo sapiens (Human).